The chain runs to 475 residues: Aspartyl/glutamyl-tRNA(Asn/Gln) amidotransferase subunit B (475 aa).

The protein belongs to the GatB/GatE family. GatB subfamily. In terms of assembly, heterotrimer of A, B and C subunits.

It carries out the reaction L-glutamyl-tRNA(Gln) + L-glutamine + ATP + H2O = L-glutaminyl-tRNA(Gln) + L-glutamate + ADP + phosphate + H(+). The catalysed reaction is L-aspartyl-tRNA(Asn) + L-glutamine + ATP + H2O = L-asparaginyl-tRNA(Asn) + L-glutamate + ADP + phosphate + 2 H(+). In terms of biological role, allows the formation of correctly charged Asn-tRNA(Asn) or Gln-tRNA(Gln) through the transamidation of misacylated Asp-tRNA(Asn) or Glu-tRNA(Gln) in organisms which lack either or both of asparaginyl-tRNA or glutaminyl-tRNA synthetases. The reaction takes place in the presence of glutamine and ATP through an activated phospho-Asp-tRNA(Asn) or phospho-Glu-tRNA(Gln). The polypeptide is Aspartyl/glutamyl-tRNA(Asn/Gln) amidotransferase subunit B (Caldanaerobacter subterraneus subsp. tengcongensis (strain DSM 15242 / JCM 11007 / NBRC 100824 / MB4) (Thermoanaerobacter tengcongensis)).